Consider the following 562-residue polypeptide: Oxygen-dependent choline dehydrogenase (562 aa).

Residue 4 to 33 (DYIIIGAGSAGNVLATRLTEDPNTSVLLLE) participates in FAD binding. His-473 functions as the Proton acceptor in the catalytic mechanism.

This sequence belongs to the GMC oxidoreductase family. FAD is required as a cofactor.

Its subcellular location is the cell membrane. It catalyses the reaction choline + A = betaine aldehyde + AH2. The enzyme catalyses betaine aldehyde + NAD(+) + H2O = glycine betaine + NADH + 2 H(+). Its pathway is amine and polyamine biosynthesis; betaine biosynthesis via choline pathway; betaine aldehyde from choline (cytochrome c reductase route): step 1/1. Functionally, involved in the biosynthesis of the osmoprotectant glycine betaine. Catalyzes the oxidation of choline to betaine aldehyde and betaine aldehyde to glycine betaine at the same rate. The polypeptide is Oxygen-dependent choline dehydrogenase (Escherichia coli O157:H7).